The sequence spans 2196 residues: MGAQVSTQKTGAHETLLEAAHGATINYTNINYYKDAASNSANRQDFSQDPGKFTEPVKDLMIKSMPALNSPSAEECGFSDRVRSLTLGNSTITTQESANVVVGYGRWPDYLADDQATAEDQPTQPDVATCRFYTLESVSWQSGSAGWWWKFPEALKDMGLFGQNMYYHYLGRAGYTIHVQCNASKFHQGCLLVVCVPEAEMGCADVTSVVTALNLINGEDAHTFSPSEATAEAGKVQTAVCNAGMGVAVGNLTIFPHQWINLRTNNCATIVMPYINSVPMDNMFRHYNFTLMVIPFAPLASQGGSTYVPITITIAPMCAEYNGLRLSTQPQGLPVMNTPGSNQFLTSDDFQSPCAMPEFDVTPPMDIPGEVRNIMEIAEVDSVVPVNNMSSKVKTIEAYQIPVSVGTTVRGDAIFSFQLNPGNSPVLNRTLLGEIINYYAHWSGSIKLTFLFCGSAMATGKLLLAYSPPGASVPTSRKDAMLGTHIIWDLGLQSSCVLCVPWISQTHYRMVQQDEYSAAGYITCWYQTNIIVPPDTPTDCIVLCFVSACNDFSVRMLKDTPFVEQEADLQGDSEHAVESAVSRVADTIMSGPSNSQQVPALTAVETGHTSQVVPSDTIQTRHVQNFHSRSESTIENFLSRSACVHIANYNAKGDKTDVNRFDRWEINIREMVQLRRKCEMFTYLRFDIEVTFVITSKQDQGPKLNQDMPVLTHQIMYVPPGGSVPSTVESYAWQTSTNPSVFWTEGNAPARMSIPFISIGNAYSSFYDGWSHFTQKGVYGYNTLNKMGQLFVRHVNKETPTPVTSTIRVYFKPKHIRAWVPRPPRLCPYVNKTNVNFITTQVTEPRNDLNDVPKSEHNMHTYGAFGQQSGAVYVGNYRVVNRHLATHNDWQNCVWEDYNRDLLVSTTTAQGCDTIARCHCTTGVYFCSSRNRHYPVSFEGPGLVEVQESEYYPKRYQSHVLLAAGFSEPGDCGGILRCEHGVIGIVTMGGEGVVGFADVRDLLWLEDDAMEQGVKDYVEQLGNAFGSGFTNQICEQVNLLKESLVGQDSILEKSLKALVKIISALVIVVRNHDDLITVTATLALIGCTSSPWRWLKQKVSQYYGIPMAERQNNGWLKKFTEMTNACKGMEWIAIKIQKFIEWLKVKILPEVKEKHEFLNRLKQLPLLESQIATIEQSAPSQSDQEQLFSNVQYFAHYCRKYAPLYAAEAKRVFSLEKKMSNYIQFKSKCRIEPVCLLLHGSPGAGKSVATNLIGRSLAEKLNSSVYSLPPDPDHFDGYKQQAVVIMDDLCQNPDGKDVSLFCQMVSSVDFVPPMAALEEKGILFTSPFVLASTNAGSINAPTVSDSRALARRFHFDMNIEVISMYSQNGKINMPMSVKTCDEECCPVNFKKCCPLVCGKAIQFIDRRTQVRYSLDMLVTEMFREYNHRHSVGATLEALFQGPPLYREIKISVAPETPPPPAIADLLKSVDSEAVREYCKEKGWLVPEINSTLQIEKHVSRAFICLQALTTFVSVAGIIYIIYKLFAGFQGAYTGMPNQKPKVPTLRQAKVQGPAFEFAVAMMKRNSSTVKTEYGEFTMLGIYDRWAVLPRHAKPGPTILMNDQEVGVLDAKELVDKDGTNLELTLLKLNRNEKFRDIRGFLAKEEVEVNEAVLAINTSKFPNMYIPVGQVTDYGFLNLGGTPTKRMLMYNFPTRAGQCGGVLMSTGKVLGIHVGGNGHQGFSAALLKHYFNDEQGEIEFIESSKDAGFPIINTPSKTKLEPSVFHQVFEGNKEPAVLRSGDPRLKANFEEAIFSKYIGNVNTHVDEYMMEAVDHYAGQLATLDISTEPMKLEDAVYGTEGLEALDLTTSAGYPYVALGIKKRDILSKRTKDLTKLKECMDKYGLNLPMVTYVKDELRSAEKVAKGKSRLIEASSLNDSVAMRQTFGNLYKTFHLNPGIVTGSAVGCDPDLFWSKIPVMLDGHLIAFDYSGYDASLSPVWFACLKMLLEKLGYTHKETNYIDYLCNSHHLYRDKHYFVRGGMPSGCSGTSIFNSMINNIIIRTLMLKVYKGIDLDQFRMIAYGDDVIASYPWPIDASLLAEAGKDYGLIMTPADKGECFNEVTWTNVTFLKRYFRADEQYPFLVHPVMPMKDIHESIRWTKDPKNTQDHVRSLCLLAWHNGEHEYEEFIRKIRSVPVGRCLTLPAFSTLRRKWLDSF.

Gly-2 is lipidated: N-myristoyl glycine; by host. Residues 2 to 1506 (GAQVSTQKTG…HVSRAFICLQ (1505 aa)) lie on the Cytoplasmic side of the membrane. The amphipathic alpha-helix stretch occupies residues 568 to 584 (DLQGDSEHAVESAVSRV). Residues His-883 and Asp-901 each act as for protease 2A activity in the active site. Residues Cys-918 and Cys-920 each coordinate Zn(2+). The active-site For protease 2A activity is Cys-972. Zn(2+)-binding residues include Cys-978 and His-980. A membrane-binding region spans residues 1112–1184 (NNGWLKKFTE…EQSAPSQSDQ (73 aa)). The segment at 1112-1250 (NNGWLKKFTE…SPGAGKSVAT (139 aa)) is oligomerization. The tract at residues 1133–1137 (AIKIQ) is RNA-binding. Residues 1216–1372 (EKKMSNYIQF…SMYSQNGKIN (157 aa)) form the SF3 helicase domain. Residues Cys-1380, Cys-1392, and Cys-1397 each coordinate Zn(2+). A C4-type; degenerate zinc finger spans residues 1380–1397 (CDEECCPVNFKKCCPLVC). The tract at residues 1424–1431 (EYNHRHSV) is RNA-binding. Residues 1435 to 1440 (LEALFQ) form an oligomerization region. Residues 1507–1522 (ALTTFVSVAGIIYIIY) lie within the membrane without spanning it. Residues 1523 to 2196 (KLFAGFQGAY…TLRRKWLDSF (674 aa)) are Cytoplasmic-facing. Position 1532 is an O-(5'-phospho-RNA)-tyrosine (Tyr-1532). The Peptidase C3 domain occupies 1552–1730 (GPAFEFAVAM…FSAALLKHYF (179 aa)). Residues His-1591, Glu-1622, and Cys-1698 each act as for protease 3C activity in the active site. The RdRp catalytic domain maps to 1961 to 2077 (GHLIAFDYSG…SYPWPIDASL (117 aa)). Mg(2+)-binding residues include Asp-1967 and Asp-2063.

This sequence belongs to the picornaviruses polyprotein family. In terms of assembly, interacts with capsid protein VP1 and capsid protein VP3 to form heterotrimeric protomers. As to quaternary structure, interacts with capsid protein VP0, and capsid protein VP3 to form heterotrimeric protomers. Five protomers subsequently associate to form pentamers which serve as building blocks for the capsid. Interacts with capsid protein VP2, capsid protein VP3 and capsid protein VP4 following cleavage of capsid protein VP0. Interacts with capsid protein VP1 and capsid protein VP3 in the mature capsid. In terms of assembly, interacts with capsid protein VP0 and capsid protein VP1 to form heterotrimeric protomers. Five protomers subsequently associate to form pentamers which serve as building blocks for the capsid. Interacts with capsid protein VP4 in the mature capsid. Interacts with protein 2C; this interaction may be important for virion morphogenesis. As to quaternary structure, interacts with capsid protein VP1 and capsid protein VP3. Homodimer. In terms of assembly, homohexamer; forms a hexameric ring structure with 6-fold symmetry characteristic of AAA+ ATPases. Interacts (via N-terminus) with host RTN3 (via reticulon domain); this interaction is important for viral replication. Interacts with capsid protein VP3; this interaction may be important for virion morphogenesis. As to quaternary structure, interacts with protein 3CD. Homodimer. Interacts with host GBF1. Interacts (via GOLD domain) with host ACBD3 (via GOLD domain); this interaction allows the formation of a viral protein 3A/ACBD3 heterotetramer with a 2:2 stoichiometry, which will stimulate the recruitment of host PI4KB in order to synthesize PI4P at the viral RNA replication sites. In terms of assembly, interacts with RNA-directed RNA polymerase. As to quaternary structure, interacts with protein 3AB and with RNA-directed RNA polymerase. Interacts with Viral protein genome-linked and with protein 3CD. Mg(2+) is required as a cofactor. In terms of processing, specific enzymatic cleavages in vivo by the viral proteases yield processing intermediates and the mature proteins. Myristoylation is required for the formation of pentamers during virus assembly. Further assembly of 12 pentamers and a molecule of genomic RNA generates the provirion. Post-translationally, during virion maturation, immature virions are rendered infectious following cleavage of VP0 into VP4 and VP2. This maturation seems to be an autocatalytic event triggered by the presence of RNA in the capsid and it is followed by a conformational change infectious virion. In terms of processing, myristoylation is required during RNA encapsidation and formation of the mature virus particle. VPg is uridylylated by the polymerase into VPg-pUpU. This acts as a nucleotide-peptide primer for the genomic RNA replication.

It is found in the virion. The protein resides in the host cytoplasm. Its subcellular location is the host cytoplasmic vesicle membrane. It localises to the host nucleus. The catalysed reaction is a ribonucleoside 5'-triphosphate + H2O = a ribonucleoside 5'-diphosphate + phosphate + H(+). The enzyme catalyses Selective cleavage of Tyr-|-Gly bond in the picornavirus polyprotein.. It carries out the reaction RNA(n) + a ribonucleoside 5'-triphosphate = RNA(n+1) + diphosphate. It catalyses the reaction Selective cleavage of Gln-|-Gly bond in the poliovirus polyprotein. In other picornavirus reactions Glu may be substituted for Gln, and Ser or Thr for Gly.. Its activity is regulated as follows. Replication or transcription is subject to high level of random mutations by the nucleotide analog ribavirin. Functionally, forms an icosahedral capsid of pseudo T=3 symmetry with capsid proteins VP2 and VP3. The capsid is 300 Angstroms in diameter, composed of 60 copies of each capsid protein and enclosing the viral positive strand RNA genome. Capsid protein VP1 mainly forms the vertices of the capsid. Capsid protein VP1 interacts with host cell receptor to provide virion attachment to target host cells. This attachment induces virion internalization. Tyrosine kinases are probably involved in the entry process. After binding to its receptor, the capsid undergoes conformational changes. Capsid protein VP1 N-terminus (that contains an amphipathic alpha-helix) and capsid protein VP4 are externalized. Together, they shape a pore in the host membrane through which viral genome is translocated to host cell cytoplasm. Its function is as follows. Forms an icosahedral capsid of pseudo T=3 symmetry with capsid proteins VP2 and VP3. The capsid is 300 Angstroms in diameter, composed of 60 copies of each capsid protein and enclosing the viral positive strand RNA genome. Lies on the inner surface of the capsid shell. After binding to the host receptor, the capsid undergoes conformational changes. Capsid protein VP4 is released, Capsid protein VP1 N-terminus is externalized, and together, they shape a pore in the host membrane through which the viral genome is translocated into the host cell cytoplasm. In terms of biological role, component of immature procapsids, which is cleaved into capsid proteins VP4 and VP2 after maturation. Allows the capsid to remain inactive before the maturation step. Functionally, cysteine protease that cleaves viral polyprotein and specific host proteins. It is responsible for the autocatalytic cleavage between the P1 and P2 regions, which is the first cleavage occurring in the polyprotein. Also cleaves the host translation initiation factor EIF4G1, in order to shut down the capped cellular mRNA translation. Inhibits the host nucleus-cytoplasm protein and RNA trafficking by cleaving host members of the nuclear pores. Counteracts stress granule formation probably by antagonizing its assembly or promoting its dissassembly. Its function is as follows. Plays an essential role in the virus replication cycle by acting as a viroporin. Creates a pore in the host endoplasmic reticulum and as a consequence releases Ca2+ in the cytoplasm of infected cell. In turn, high levels of cytoplasmic calcium may trigger membrane trafficking and transport of viral ER-associated proteins to viroplasms, sites of viral genome replication. Induces and associates with structural rearrangements of intracellular membranes. Displays RNA-binding, nucleotide binding and NTPase activities. May play a role in virion morphogenesis and viral RNA encapsidation by interacting with the capsid protein VP3. In terms of biological role, localizes the viral replication complex to the surface of membranous vesicles. Together with protein 3CD binds the Cis-Active RNA Element (CRE) which is involved in RNA synthesis initiation. Acts as a cofactor to stimulate the activity of 3D polymerase, maybe through a nucleid acid chaperone activity. Functionally, localizes the viral replication complex to the surface of membranous vesicles. It inhibits host cell endoplasmic reticulum-to-Golgi apparatus transport and causes the disassembly of the Golgi complex, possibly through GBF1 interaction. This would result in depletion of MHC, trail receptors and IFN receptors at the host cell surface. Plays an essential role in viral RNA replication by recruiting ACBD3 and PI4KB at the viral replication sites, thereby allowing the formation of the rearranged membranous structures where viral replication takes place. Its function is as follows. Acts as a primer for viral RNA replication and remains covalently bound to viral genomic RNA. VPg is uridylylated prior to priming replication into VPg-pUpU. The oriI viral genomic sequence may act as a template for this. The VPg-pUpU is then used as primer on the genomic RNA poly(A) by the RNA-dependent RNA polymerase to replicate the viral genome. During genome replication, the VPg-RNA linkage is removed by the host TDP2, thereby accelerating replication. During the late stage of the replication cycle, host TDP2 is excluded from sites of viral RNA synthesis and encapsidation, allowing for the generation of progeny virions. Involved in the viral replication complex and viral polypeptide maturation. It exhibits protease activity with a specificity and catalytic efficiency that is different from protease 3C. Protein 3CD lacks polymerase activity. Protein 3CD binds to the 5'UTR of the viral genome. In terms of biological role, replicates the viral genomic RNA on the surface of intracellular membranes. May form linear arrays of subunits that propagate along a strong head-to-tail interaction called interface-I. Covalently attaches UMP to a tyrosine of VPg, which is used to prime RNA synthesis. The positive stranded RNA genome is first replicated at virus induced membranous vesicles, creating a dsRNA genomic replication form. This dsRNA is then used as template to synthesize positive stranded RNA genomes. ss(+)RNA genomes are either translated, replicated or encapsidated. Functionally, major viral protease that mediates proteolytic processing of the polyprotein. Cleaves host EIF5B, contributing to host translation shutoff. Also cleaves host PABPC1, contributing to host translation shutoff. Cleaves host NLRP1, triggers host N-glycine-mediated degradation of the autoinhibitory NLRP1 N-terminal fragment. This is Genome polyprotein from Homo sapiens (Human).